The primary structure comprises 110 residues: Integration host factor subunit alpha (110 aa).

This sequence belongs to the bacterial histone-like protein family. In terms of assembly, heterodimer of an alpha and a beta chain.

Functionally, this protein is one of the two subunits of integration host factor, a specific DNA-binding protein that functions in genetic recombination as well as in transcriptional and translational control. The sequence is that of Integration host factor subunit alpha from Bdellovibrio bacteriovorus (strain ATCC 15356 / DSM 50701 / NCIMB 9529 / HD100).